The chain runs to 199 residues: Putative rhomboid protease YdcA (199 aa).

The next 6 helical transmembrane spans lie at 14–34 (LYPV…FFSL), 65–85 (ILLH…FLFA), 97–117 (FLLV…VTEP), 122–142 (HVGA…MVLF), 147–167 (IGQE…LMSF), and 172–192 (INMM…FLCV). Ser126 acts as the Nucleophile in catalysis. The Charge relay system role is filled by His177.

The protein belongs to the peptidase S54 family.

The protein resides in the cell membrane. In Bacillus subtilis (strain 168), this protein is Putative rhomboid protease YdcA (ydcA).